The sequence spans 859 residues: Cation/H(+) antiporter 24 (859 aa).

12 consecutive transmembrane segments (helical) span residues 64 to 84 (AFST…VVSI), 92 to 112 (PRIV…FGGI), 122 to 142 (PIAN…FLFL), 161 to 181 (YIAA…GMAM), 194 to 214 (SIGG…YTVL), 227 to 247 (FAMS…VIFE), 258 to 278 (YSVF…LLVV), 291 to 311 (EGTL…LASC), 312 to 332 (FLTD…GLLV), 348 to 368 (TFIY…GTNI), 384 to 404 (FYMT…AALF), and 438 to 458 (IVGF…TAVT). The tract at residues 538-566 (IDHEQRKEEEEEEYEEEEEEPERKQSGRI) is disordered. The segment covering 546-557 (EEEEEYEEEEEE) has biased composition (acidic residues). At Ser-857 the chain carries Phosphoserine.

It belongs to the monovalent cation:proton antiporter 2 (CPA2) transporter (TC 2.A.37) family. CHX (TC 2.A.37.4) subfamily. Specifically expressed in pollen.

The protein localises to the membrane. May operate as a cation/H(+) antiporter. This is Cation/H(+) antiporter 24 (CHX24) from Arabidopsis thaliana (Mouse-ear cress).